A 328-amino-acid polypeptide reads, in one-letter code: MSDILDYPDVSSPAAAPDLADLGGEPARARPSSHLQRLESESIHILREVAAEFRKPVMLYSIGKDSSVLLHLAMKAFAPGKPPFPLLHVDTTWKFREMIAFRDQRIRELGLDLLVHVNPDGVAQRVGPFSHGSARHTDVMKTQALRQALDAHGFDAAIGGARRDEEKSRAKERIFSHRSAAHRWDPKNQRPELWSLYNTMLAPGESMRVFPLSNWTELDIWDYILIERIPIVPLYFAAERPVVERDGALILVDDERMPLRPGEVPQWRSVRFRTLGCYPLTGAVPSTATTLPAIVQEMMASRSSEREGRVIDRDSTASMERKKAEGYF.

Disordered stretches follow at residues Ala-15–His-34 and Ser-304–Phe-328.

This sequence belongs to the PAPS reductase family. CysD subfamily. Heterodimer composed of CysD, the smaller subunit, and CysN.

It carries out the reaction sulfate + ATP + H(+) = adenosine 5'-phosphosulfate + diphosphate. It participates in sulfur metabolism; hydrogen sulfide biosynthesis; sulfite from sulfate: step 1/3. With CysN forms the ATP sulfurylase (ATPS) that catalyzes the adenylation of sulfate producing adenosine 5'-phosphosulfate (APS) and diphosphate, the first enzymatic step in sulfur assimilation pathway. APS synthesis involves the formation of a high-energy phosphoric-sulfuric acid anhydride bond driven by GTP hydrolysis by CysN coupled to ATP hydrolysis by CysD. This is Sulfate adenylyltransferase subunit 2 from Rhodopseudomonas palustris (strain BisA53).